Here is a 350-residue protein sequence, read N- to C-terminus: Phosphoribosylformylglycinamidine cyclo-ligase (350 aa).

Belongs to the AIR synthase family.

The protein resides in the cytoplasm. The catalysed reaction is 2-formamido-N(1)-(5-O-phospho-beta-D-ribosyl)acetamidine + ATP = 5-amino-1-(5-phospho-beta-D-ribosyl)imidazole + ADP + phosphate + H(+). The protein operates within purine metabolism; IMP biosynthesis via de novo pathway; 5-amino-1-(5-phospho-D-ribosyl)imidazole from N(2)-formyl-N(1)-(5-phospho-D-ribosyl)glycinamide: step 2/2. In Cupriavidus metallidurans (strain ATCC 43123 / DSM 2839 / NBRC 102507 / CH34) (Ralstonia metallidurans), this protein is Phosphoribosylformylglycinamidine cyclo-ligase.